A 330-amino-acid chain; its full sequence is Dof zinc finger protein DOF2.4 (330 aa).

The span at asparagine 14–histidine 25 shows a compositional bias: polar residues. Positions asparagine 14–alanine 70 are disordered. Positions proline 40 to asparagine 55 are enriched in low complexity. Residues glycine 56–isoleucine 68 are compositionally biased toward gly residues. The Dof-type zinc-finger motif lies at leucine 89–arginine 143. Cysteine 91, cysteine 94, cysteine 116, and cysteine 119 together coordinate Zn(2+). 2 disordered regions span residues proline 133–serine 165 and glutamine 255–glycine 276. Residues serine 146–serine 165 are compositionally biased toward low complexity. Over residues glutamate 265 to glycine 276 the composition is skewed to polar residues.

Specific to the vascular tissues. The PEAR proteins (e.g. DOF2.4, DOF5.1, DOF3.2, DOF1.1, DOF5.6 and DOF5.3) form a short-range concentration gradient that peaks at protophloem sieve elements (PSE).

The protein localises to the nucleus. The protein resides in the symplast. Its function is as follows. Transcription factor that binds specifically to a 5'-AA[AG]G-3' consensus core sequence. Probably involved in early processes for vascular development. The PEAR proteins (e.g. DOF2.4, DOF5.1, DOF3.2, DOF1.1, DOF5.6 and DOF5.3) activate gene expression that promotes radial growth of protophloem sieve elements. Triggers the transcription of HD-ZIP III genes, especially in the central domain of vascular tissue. The sequence is that of Dof zinc finger protein DOF2.4 from Arabidopsis thaliana (Mouse-ear cress).